The following is a 532-amino-acid chain: MFTDMVSKLTSLQQELLSALLDSGVTKDVLVQALEDLCPCPAEFGIKIEKPLSPSSANGGSDCGDSKPVFLTLTGAQGKGGKLSGDEGSEDGDDFDTPPILRELQSLNTEEAAEQRAEVDRMLSEDPWRVARTIKGYMQQHNIPQREVVDVTGLNQSHLSQHLNKGTPMKTAKRAALYTWYVQKQREIDRQFDRVQGSDPSDSASQDQVLFFFPEFNHGGHSSGAAGGSGAAVGDEGEPGSKRMRRNRFKWGPASQEILYQAYERQKNPSKEEREALVEECNRAECVQRGVSPSKAHGLGSNLVTEVRVYNWFANRRKEEAFRQKLAMDTYTPHMNPLLSHTASLSHHHSSESKLRYSQQAASEVTSSTTISHPSVLQQVSPGGLDHCHGLLSTDAKMISVSGGVLPPVSTLTNIHSLSQSSHHHHHHHHQQAQSLIMSLAAQSLTSPQSQSVPVINSVSGLTTLQPMQFPQSSSLTQLTTAHISQQPFAQSHMYSPKQEAGQFSHPSRYSTMDSSTITHLGSSKQCPLQAW.

The dimerization stretch occupies residues 1-35 (MFTDMVSKLTSLQQELLSALLDSGVTKDVLVQALE). The HNF-p1 domain occupies 5–36 (MVSKLTSLQQELLSALLDSGVTKDVLVQALED). The disordered stretch occupies residues 74-95 (TGAQGKGGKLSGDEGSEDGDDF). The 96-residue stretch at 102 to 197 (RELQSLNTEE…IDRQFDRVQG (96 aa)) folds into the POU-specific atypical domain. Residues 222 to 231 (SSGAAGGSGA) are compositionally biased toward gly residues. 2 disordered regions span residues 222–245 (SSGA…KRMR) and 500–532 (EAGQ…LQAW). Residues 244–324 (MRRNRFKWGP…NRRKEEAFRQ (81 aa)) constitute a DNA-binding region (homeobox; HNF1-type). The span at 505–532 (SHPSRYSTMDSSTITHLGSSKQCPLQAW) shows a compositional bias: polar residues.

It belongs to the HNF1 homeobox family. Binds DNA as a dimer. Can form homodimer or heterodimer with HNF1-alpha. In terms of tissue distribution, first expressed at stage 10 in the intermediate mesoderm. Expressed in rhombomere r5 by 14 hpf with expression diminishing by 18 hpf.

Its subcellular location is the nucleus. Its function is as follows. Transcription factor that binds to the inverted palindrome 5'-GTTAATNATTAAC-3'. Acts downstream of hnf1ba but is not required for induction of rhombomere r5/r6 gene expression in the hindbrain. The protein is Hepatocyte nuclear factor 1-beta-B of Danio rerio (Zebrafish).